The sequence spans 435 residues: Antho-RFamide neuropeptides type 1 (435 aa).

A signal peptide spans 1-22; the sequence is MTTVSYVTILLTVLVQVLTSDA. The propeptide occupies 23-193; sequence KATNNKRELS…SVPGRYGREL (171 aa). Residue Q194 is modified to Pyrrolidone carboxylic acid. Residue F197 is modified to Phenylalanine amide. A propeptide spanning residues 199-201 is cleaved from the precursor; it reads REL. F205 carries the phenylalanine amide modification. A propeptide spanning residues 207 to 209 is cleaved from the precursor; the sequence is REA. F213 carries the post-translational modification Phenylalanine amide. A propeptide spanning residues 215–217 is cleaved from the precursor; the sequence is REL. At F221 the chain carries Phenylalanine amide. Residues 223 to 225 constitute a propeptide that is removed on maturation; that stretch reads REF. Position 229 is a phenylalanine amide (F229). The span at 230–371 shows a compositional bias: basic and acidic residues; it reads GREDQGRFGR…EDIAEADQGR (142 aa). Disordered stretches follow at residues 230–374 and 386–435; these read GRED…RFGR and AKKR…AKTS. Positions 231 to 233 are excised as a propeptide; sequence RED. F237 carries the post-translational modification Phenylalanine amide. A propeptide spanning residues 239–241 is cleaved from the precursor; the sequence is RED. F245 is modified (phenylalanine amide). A propeptide spanning residues 247–249 is cleaved from the precursor; the sequence is RED. A Phenylalanine amide modification is found at F253. Positions 255–257 are excised as a propeptide; it reads RED. A Phenylalanine amide modification is found at F261. Positions 263–265 are excised as a propeptide; sequence RED. F269 is subject to Phenylalanine amide. A propeptide spanning residues 271–273 is cleaved from the precursor; the sequence is RED. F277 carries the phenylalanine amide modification. Positions 279 to 281 are excised as a propeptide; sequence REL. F285 bears the Phenylalanine amide mark. Positions 287 to 289 are excised as a propeptide; sequence REF. F293 carries the post-translational modification Phenylalanine amide. Residues 295–297 constitute a propeptide that is removed on maturation; the sequence is RED. Phenylalanine amide is present on F301. A propeptide spanning residues 303-305 is cleaved from the precursor; sequence RED. F309 is modified (phenylalanine amide). A propeptide spanning residues 311–313 is cleaved from the precursor; sequence REL. Position 317 is a phenylalanine amide (F317). Positions 319–321 are excised as a propeptide; sequence RED. The residue at position 325 (F325) is a Phenylalanine amide. Positions 327–329 are excised as a propeptide; sequence RED. Residue F333 is modified to Phenylalanine amide. Residues 335–342 constitute a propeptide that is removed on maturation; it reads REDLAKED. F346 bears the Phenylalanine amide mark. Residues 348–355 constitute a propeptide that is removed on maturation; the sequence is REDLAKED. F359 carries the phenylalanine amide modification. Positions 361-368 are excised as a propeptide; that stretch reads REDIAEAD. F372 carries the phenylalanine amide modification. Residues 374-435 constitute a propeptide that is removed on maturation; that stretch reads RNAAAAAAAA…KSDDALAKTS (62 aa). Residues 398–435 are compositionally biased toward basic and acidic residues; the sequence is SDPKPQTRFRDGKDMQEKRKVEKKDKIEKSDDALAKTS.

This sequence belongs to the FARP (FMRFamide related peptide) family.

The protein resides in the secreted. In terms of biological role, not known but it could act as a transmitter at neuromuscular synapses. The protein is Antho-RFamide neuropeptides type 1 of Anthopleura elegantissima (Green aggregating anemone).